Here is a 611-residue protein sequence, read N- to C-terminus: MAU2 chromatid cohesion factor homolog (611 aa).

TPR repeat units follow at residues 11–46 (YAGL…NPPP), 91–124 (FEAS…TSGE), 131–164 (FRLF…AEQC), 371–404 (PILH…ADNP), and 490–523 (ACSL…SGKI). The disordered stretch occupies residues 581–611 (WTGAVSPTKSSTIPPQQSFQTWSQPGPSRLS). Residues 585 to 611 (VSPTKSSTIPPQQSFQTWSQPGPSRLS) show a composition bias toward polar residues.

Belongs to the SCC4/mau-2 family. As to quaternary structure, component of the cohesin loading complex.

Its subcellular location is the nucleus. The protein localises to the nucleoplasm. In terms of biological role, required for association of the cohesin complex with chromatin during interphase. Plays a role in sister chromatid cohesion and normal progression through prometaphase. The protein is MAU2 chromatid cohesion factor homolog of Nematostella vectensis (Starlet sea anemone).